Here is a 980-residue protein sequence, read N- to C-terminus: Alanine--tRNA ligase, mitochondrial (980 aa).

Residues 1-23 constitute a mitochondrion transit peptide; it reads MAVALAAAAGKLRRAIGRSCPWQ. Residues R105, H123, W205, and 235–237 contribute to the ATP site; that span reads LWN. Residues N237 and D260 each coordinate L-alanine. G264 provides a ligand contact to ATP. Zn(2+) is bound by residues H627, H631, C744, and H748.

The protein belongs to the class-II aminoacyl-tRNA synthetase family. As to quaternary structure, monomer. Requires Zn(2+) as cofactor.

The protein localises to the mitochondrion. The catalysed reaction is tRNA(Ala) + L-alanine + ATP = L-alanyl-tRNA(Ala) + AMP + diphosphate. The enzyme catalyses (S)-lactate + ATP + H(+) = (S)-lactoyl-AMP + diphosphate. It carries out the reaction (S)-lactoyl-AMP + L-lysyl-[protein] = N(6)-[(S)-lactoyl]-L-lysyl-[protein] + AMP + 2 H(+). Its function is as follows. Catalyzes the attachment of alanine to tRNA(Ala) in a two-step reaction: alanine is first activated by ATP to form Ala-AMP and then transferred to the acceptor end of tRNA(Ala). Also edits incorrectly charged tRNA(Ala) via its editing domain. In presence of high levels of lactate, also acts as a protein lactyltransferase that mediates lactylation of lysine residues in target proteins, such as CGAS. Acts as an inhibitor of cGAS/STING signaling by catalyzing lactylation of CGAS, preventing the formation of liquid-like droplets in which CGAS is activated. The sequence is that of Alanine--tRNA ligase, mitochondrial (Aars2) from Mus musculus (Mouse).